An 809-amino-acid polypeptide reads, in one-letter code: MSQDQEEDYSKLPLESRIVHKVWKVRLSAYEECSKSFSLSADGSDNCFELWNNQSELWKSVLTDSNVAAQEAGTAAFVAYCRFSDPSHLLKAREISVLSISEKCLTSPRAGTRENALEALMLLVEADSAAPVIESIIPSLSARSPKVIASNVAAIASLVEQFGAKVIPSKMIIPHISNLFGHADKNVRKEASRLTVNIYRWTGDPLKDLLFKDLRPVQTKELESLFAELPTEPPKQTRFLKSQQPTSEPNVETQVEEQPALENEESEPEPSDDQFDLVEEVDVLPNVDPNLETLMASSKWKDRKEALDKLLPVLSQPKIKDNDFFNLVAILTKSVSKDANIMVVINAAHCIQAMAKGLRSNFSKYASTSINALLERSKEKKANVIESLSSAMDAVLATSSLDDLAELIASFAGNKNPQIKSSCFSLFSRSFSNMTSLPSKFTVDTCAKACVPGVSDTFEPVRSAAAEALGVLMKLVGERAINQYLSPLDDIRKSKIRSFYETATVKAKAPTKKSKVKPSKQEESKVVVPSNAKAVKKSVVPSSPVVPSPRKATNKSLSMDVSKGNAFENGPLLPRPTTRPVSRGLSRGTSSSLQQKVKASTPLNSGALNETVQNLKNMELDDPAPQPAKHSRVDRYEHPKVLEDNDSTISSLESLKRENEELREQLKVEHEENISMQKQLSELKGELNTLRSARKASPIGDRKPAFMRRANTDFLELSTSPSFQRSVREFEPTRPKLYSSIDVNQRSPLASAKTNGNFTFHAELPRSPFSSRANNINPDWTKAIDLAAKLKQKITEMKQTDQRHQGLIH.

HEAT repeat units follow at residues 127–164 (DSAA…QFGA) and 167–204 (IPSK…WTGD). 3 disordered regions span residues 233–274 (PPKQ…SDDQ), 507–608 (AKAP…SGAL), and 619–638 (ELDD…RYEH). Positions 239–253 (FLKSQQPTSEPNVET) are enriched in polar residues. Positions 262–274 (ENEESEPEPSDDQ) are enriched in acidic residues. A compositionally biased stretch (basic residues) spans 509–518 (APTKKSKVKP). Composition is skewed to low complexity over residues 526–551 (VVVP…SPRK) and 582–595 (SRGL…SLQQ). Phosphoserine occurs at positions 543 and 548. Positions 597-608 (VKASTPLNSGAL) are enriched in polar residues. Positions 637 to 697 (EHPKVLEDND…NTLRSARKAS (61 aa)) form a coiled coil. 2 positions are modified to phosphoserine: Ser-697 and Ser-720.

The protein belongs to the TOG/XMAP215 family. As to quaternary structure, interacts with alp14.

It is found in the cytoplasm. It localises to the cytoskeleton. The protein resides in the microtubule organizing center. Its subcellular location is the spindle pole body. The protein localises to the chromosome. It is found in the centromere. It localises to the kinetochore. Required for bipolar spindle formation and proper chromosome segregation. Has a role in connecting the kinetochores and the plus end of pole to chromosome microtubules. Also required for the activation of the spindle checkpoint pathway. This chain is Spindle pole body component alp14 (alp14), found in Schizosaccharomyces pombe (strain 972 / ATCC 24843) (Fission yeast).